The chain runs to 61 residues: Insect toxin LqhIT5 (61 aa).

The region spanning 1–61 (DGYIRGGDGC…EWKYETNTCG (61 aa)) is the LCN-type CS-alpha/beta domain. Cystine bridges form between C10-C60, C14-C35, C21-C42, and C25-C44.

Belongs to the long (4 C-C) scorpion toxin superfamily. Sodium channel inhibitor family. Beta subfamily. Expressed by the venom gland.

The protein resides in the secreted. Its function is as follows. Excitatory insect beta-toxins induce a spastic paralysis. They bind voltage-independently at site-4 of sodium channels (Nav) and shift the voltage of activation toward more negative potentials thereby affecting sodium channel activation and promoting spontaneous and repetitive firing. This toxin is active only on insects. It operates by inducing a fast contraction paralysis without depressant activity. It is more similar to the excitatory toxins in its mode of action and the depressant toxins in its primary structure. This is Insect toxin LqhIT5 from Leiurus hebraeus (Hebrew deathstalker scorpion).